A 125-amino-acid polypeptide reads, in one-letter code: Diol dehydratase-reactivating factor small subunit (125 aa).

Glu-31 contacts Mg(2+).

It belongs to the DdrB/PduH family. Component of the DDR complex, a heterotetramer of DdrA(2)/DdrB(2). The DDR complex interacts with the diol dehydratase complex in the presence of ADP but not ATP. Mg(2+) is required as a cofactor.

The enzyme catalyses ATP + H2O = ADP + phosphate + H(+). In terms of biological role, small subunit of the diol dehydratase-reactivating factor (DDR), which reactivates suicidally inhibited adenosylcobalamin-dependent diol dehydratase (DD, pddA, pddB, pddC). DDR acts as a chaperone, reactivates inactivated DD holoenzyme in the presence of ATP, Mg(2+) and free adenosylcobalamin (AdoCbl), by mediating the exchange of the tightly bound damaged cofactor AdoCbl for a free intact one. Reactivation takes place in two steps: ADP-dependent cobalamin release, and ATP-dependent dissociation of the DD apoenzyme-DDR complex. DDR has weak ATPase activity which is required for DD reactivation. Activates glycerol-inactivated, O2-inactivated holoenzyme and inactivated enzyme-cyanocobalamin complex. Also reactivates glycerol-inactivated hologlycerol dehydratase, a DD isozyme. The protein is Diol dehydratase-reactivating factor small subunit of Klebsiella michiganensis (strain ATCC 8724 / DSM 4798 / JCM 20051 / NBRC 3318 / NRRL B-199 / KCTC 1686 / BUCSAV 143 / CCM 1901).